The primary structure comprises 130 residues: Small ribosomal subunit protein uS9 (130 aa).

It belongs to the universal ribosomal protein uS9 family.

The protein is Small ribosomal subunit protein uS9 of Albidiferax ferrireducens (strain ATCC BAA-621 / DSM 15236 / T118) (Rhodoferax ferrireducens).